Consider the following 591-residue polypeptide: Probable translation initiation factor IF-2 (591 aa).

The tr-type G domain maps to Leu-7 to Glu-223. The interval Gly-16–Thr-23 is G1. Residue Gly-16–Thr-23 participates in GTP binding. The interval Ala-41–His-45 is G2. The tract at residues Asp-78–Gly-81 is G3. Residues Asp-78–His-82 and Asn-132–Asp-135 contribute to the GTP site. Positions Asn-132–Asp-135 are G4. A G5 region spans residues Ser-200–Phe-202.

This sequence belongs to the TRAFAC class translation factor GTPase superfamily. Classic translation factor GTPase family. IF-2 subfamily.

Function in general translation initiation by promoting the binding of the formylmethionine-tRNA to ribosomes. Seems to function along with eIF-2. The protein is Probable translation initiation factor IF-2 of Methanosarcina mazei (strain ATCC BAA-159 / DSM 3647 / Goe1 / Go1 / JCM 11833 / OCM 88) (Methanosarcina frisia).